The chain runs to 455 residues: Ribosomal protein uS12 methylthiotransferase RimO (455 aa).

The region spanning 30–140 (PTIGMVSLGC…VLDAVHGAVP (111 aa)) is the MTTase N-terminal domain. 6 residues coordinate [4Fe-4S] cluster: C39, C75, C104, C171, C175, and C178. The Radical SAM core domain occupies 157 to 386 (LTPRHFSYLK…MEKAQAISEV (230 aa)). The TRAM domain maps to 389 to 455 (AAKVGRRIEV…GEYDIWGRPV (67 aa)).

Belongs to the methylthiotransferase family. RimO subfamily. [4Fe-4S] cluster serves as cofactor.

It is found in the cytoplasm. The catalysed reaction is L-aspartate(89)-[ribosomal protein uS12]-hydrogen + (sulfur carrier)-SH + AH2 + 2 S-adenosyl-L-methionine = 3-methylsulfanyl-L-aspartate(89)-[ribosomal protein uS12]-hydrogen + (sulfur carrier)-H + 5'-deoxyadenosine + L-methionine + A + S-adenosyl-L-homocysteine + 2 H(+). In terms of biological role, catalyzes the methylthiolation of an aspartic acid residue of ribosomal protein uS12. This is Ribosomal protein uS12 methylthiotransferase RimO from Cereibacter sphaeroides (strain ATCC 17023 / DSM 158 / JCM 6121 / CCUG 31486 / LMG 2827 / NBRC 12203 / NCIMB 8253 / ATH 2.4.1.) (Rhodobacter sphaeroides).